The following is a 73-amino-acid chain: Gene 30 protein (73 aa).

The region spanning 12–66 (LEKAINAVGGSQKVLAEKVGVTPQAINMLKKRGGSLPVTKMRKYEEVTGLPREVL) is the HTH cro/C1-type domain. A DNA-binding region (H-T-H motif) is located at residues 23–42 (QKVLAEKVGVTPQAINMLKK).

In Escherichia coli (Bacteriophage phi-80), this protein is Gene 30 protein (30).